The chain runs to 226 residues: MAEGRGPVVALVPAAGQGVRLGENKPKAFVDLGGTTMLTRAVDGLLQSGAVDRVVVIVPEELVESTRSLLPGHVTVVAGGSERTGSVRAGLAVADDAEYVLVHDAARALTPPSLIARVVAELRCGRRAVIPVLPVADTIKTVDVLGAVTGTPERSELRAVQTPQGFTAELLRRAYAAADGIATDDAGLVERLGERVRSIVGEPTAFKITTPLDLVLARALVEEGAH.

This sequence belongs to the IspD/TarI cytidylyltransferase family. IspD subfamily.

It carries out the reaction 2-C-methyl-D-erythritol 4-phosphate + CTP + H(+) = 4-CDP-2-C-methyl-D-erythritol + diphosphate. It participates in isoprenoid biosynthesis; isopentenyl diphosphate biosynthesis via DXP pathway; isopentenyl diphosphate from 1-deoxy-D-xylulose 5-phosphate: step 2/6. Its function is as follows. Catalyzes the formation of 4-diphosphocytidyl-2-C-methyl-D-erythritol from CTP and 2-C-methyl-D-erythritol 4-phosphate (MEP). This is 2-C-methyl-D-erythritol 4-phosphate cytidylyltransferase from Rhodococcus opacus (strain B4).